Reading from the N-terminus, the 952-residue chain is ALS2 C-terminal-like protein (952 aa).

8 MORN repeats span residues 358–380, 381–403, 409–431, 432–454, 459–481, 483–505, 506–528, and 529–552; these read YDGEWCRAKPHGKGTLKWPDGRN, HVGTFYQGLEHGFGICLVPQASE, YKCHWREGRMCEYGICEYGTDEV, YKGYFQAGLRHGFGILESAPQAP, YTGHWERGQRSGYGIEEDRDRGE, YIGMWQADQRHGPGVVVTQAGVC, YQGTFQGDKMAGPGILLCEDDSL, and YEGTFTRDLTLLGKGKVTFPNGFT. The VPS9 domain maps to 795 to 941; the sequence is LFPDTKLLEF…IQKEDMRPHH (147 aa).

In terms of assembly, homodimer. Forms a heteromeric complex with ALS2. Interacts with ALS2 and RAB5A. Expressed in heart, lung, liver and kidney.

The protein localises to the cytoplasm. Functionally, acts as a guanine nucleotide exchange factor (GEF) for Rab5 GTPase. Regulates the ALS2-mediated endosome dynamics. The sequence is that of ALS2 C-terminal-like protein (Als2cl) from Mus musculus (Mouse).